The chain runs to 352 residues: Probable protein kinase DDB_G0291842 (352 aa).

The tract at residues 1–57 (MRPLPDQSAFEDKSELVSKKQKNEDENNENRSPETPRTPKVCPKTPTKTPLRTPTKN) is disordered. The span at 10 to 34 (FEDKSELVSKKQKNEDENNENRSPE) shows a compositional bias: basic and acidic residues. The span at 38–56 (TPKVCPKTPTKTPLRTPTK) shows a compositional bias: low complexity. Residues 77–331 (FEYINQIGEG…IQSLLKYDKL (255 aa)) form the Protein kinase domain. Residues 83–91 (IGEGSFAKV) and lysine 106 each bind ATP. Residue aspartate 207 is the Proton acceptor of the active site. 2 residues coordinate Mg(2+): asparagine 212 and aspartate 225.

This sequence belongs to the protein kinase superfamily. Ser/Thr protein kinase family. WEE1 subfamily.

The enzyme catalyses L-seryl-[protein] + ATP = O-phospho-L-seryl-[protein] + ADP + H(+). The catalysed reaction is L-threonyl-[protein] + ATP = O-phospho-L-threonyl-[protein] + ADP + H(+). The sequence is that of Probable protein kinase DDB_G0291842 from Dictyostelium discoideum (Social amoeba).